Here is a 174-residue protein sequence, read N- to C-terminus: Crossover junction endodeoxyribonuclease RuvC (174 aa).

Active-site residues include aspartate 8, glutamate 67, and aspartate 139. Mg(2+) is bound by residues aspartate 8, glutamate 67, and aspartate 139.

The protein belongs to the RuvC family. Homodimer which binds Holliday junction (HJ) DNA. The HJ becomes 2-fold symmetrical on binding to RuvC with unstacked arms; it has a different conformation from HJ DNA in complex with RuvA. In the full resolvosome a probable DNA-RuvA(4)-RuvB(12)-RuvC(2) complex forms which resolves the HJ. It depends on Mg(2+) as a cofactor.

It is found in the cytoplasm. It catalyses the reaction Endonucleolytic cleavage at a junction such as a reciprocal single-stranded crossover between two homologous DNA duplexes (Holliday junction).. In terms of biological role, the RuvA-RuvB-RuvC complex processes Holliday junction (HJ) DNA during genetic recombination and DNA repair. Endonuclease that resolves HJ intermediates. Cleaves cruciform DNA by making single-stranded nicks across the HJ at symmetrical positions within the homologous arms, yielding a 5'-phosphate and a 3'-hydroxyl group; requires a central core of homology in the junction. The consensus cleavage sequence is 5'-(A/T)TT(C/G)-3'. Cleavage occurs on the 3'-side of the TT dinucleotide at the point of strand exchange. HJ branch migration catalyzed by RuvA-RuvB allows RuvC to scan DNA until it finds its consensus sequence, where it cleaves and resolves the cruciform DNA. In Pseudomonas putida (strain ATCC 47054 / DSM 6125 / CFBP 8728 / NCIMB 11950 / KT2440), this protein is Crossover junction endodeoxyribonuclease RuvC.